The sequence spans 863 residues: uncharacterized protein (863 aa).

Residues 1–29 form the signal peptide; it reads MHQSGSVSLCRSAISVLVATALYSPIALA. The 269-residue stretch at 595 to 863 folds into the Autotransporter domain; sequence GVSYDTAMWS…NTQAGVVWTF (269 aa).

It localises to the cell outer membrane. This is an uncharacterized protein from Escherichia coli (strain K12).